The following is a 132-amino-acid chain: Protein LH2 (132 aa).

This Pantherophis guttatus (Corn snake) protein is Protein LH2.